We begin with the raw amino-acid sequence, 696 residues long: Iron-sulfur clusters transporter ATM1, mitochondrial (696 aa).

Residues 1-67 (MIKWGLFGAV…RFFSSSHKLG (67 aa)) constitute a mitochondrion transit peptide. Over 68–109 (VNTKEDSSTYLFGRKISTSESKMLKSLLVTIWPKNKPSFKLR) the chain is Mitochondrial matrix. Residues 110-131 (VIFALSLLIASKLLNVEVPFFF) form a helical membrane-spanning segment. One can recognise an ABC transmembrane type-1 domain in the interval 110–400 (VIFALSLLIA…LGSVYRELKQ (291 aa)). Residues 132 to 154 (KKIIDEMNVDWNDQLGTVGTVIG) lie on the Mitochondrial intermembrane side of the membrane. The helical transmembrane segment at 155–178 (TLIIAYGGARFGAVLFGELRNAVF) threads the bilayer. The Mitochondrial matrix segment spans residues 179 to 227 (ASVAQTAIKRVAHNTFVHLLNMDLNFHLSRQTGGLTRAIDRGTKGISYV). A helical membrane pass occupies residues 228 to 251 (LNAMVFHIIPISFEISMVCGILIY). Asn-252 is a topological domain (mitochondrial intermembrane). The chain crosses the membrane as a helical span at residues 253-273 (YGLSFAAVTLATMLSYSVFTI). Residues 274–339 (KTTAWRTGFR…ASVKVATSLA (66 aa)) are Mitochondrial matrix-facing. Glutathione is bound by residues 279–283 (RTGFR) and 342–345 (NAGQ). The chain crosses the membrane as a helical span at residues 340-358 (YLNAGQNFIFTSALTAMMY). The Mitochondrial intermembrane portion of the chain corresponds to 359–373 (MGCNGVATGSLTVGD). A helical membrane pass occupies residues 374–395 (LVLINQLVFQLSVPLSFLGSVY). Residue Gly-392 coordinates glutathione. The Mitochondrial matrix portion of the chain corresponds to 396-696 (RELKQSLLDM…EYAKETEEQK (301 aa)). The ABC transporter domain occupies 438 to 674 (IKFENVTFGY…PNSLYSQLWN (237 aa)). Residues Tyr-447 and 471-482 (GPSGSGKSTILR) contribute to the ATP site.

The protein belongs to the ABC transporter superfamily. ABCB family. Heavy Metal importer (TC 3.A.1.210) subfamily. Homodimer.

It is found in the mitochondrion inner membrane. Performs an essential function in the generation of cytoplasmic iron-sulfur proteins by mediating the ATP-dependent export of Fe/S cluster precursors synthesized by NFS1 and other mitochondrial proteins. Hydrolyzes ATP. Binds glutathione and may function by transporting a glutathione-conjugated iron-sulfur compound. This Debaryomyces hansenii (strain ATCC 36239 / CBS 767 / BCRC 21394 / JCM 1990 / NBRC 0083 / IGC 2968) (Yeast) protein is Iron-sulfur clusters transporter ATM1, mitochondrial.